Here is a 439-residue protein sequence, read N- to C-terminus: Cysteine desulfurase-like protein ustD (439 aa).

The segment at 1 to 25 (MKSVATSSLDDVDKDSVPLGSSING) is disordered. Residues 120 to 121 (TT), Asn206, and 255 to 257 (SWY) each bind pyridoxal 5'-phosphate. Lys258 is modified (N6-(pyridoxal phosphate)lysine).

The protein belongs to the class-V pyridoxal-phosphate-dependent aminotransferase family. Pyridoxal 5'-phosphate serves as cofactor.

It functions in the pathway mycotoxin biosynthesis. In terms of biological role, cysteine desulfurase-like protein; part of the gene cluster that mediates the biosynthesis of the secondary metabolite ustiloxin B, an antimitotic tetrapeptide. First, ustA is processed by the subtilisin-like endoprotease Kex2 that is outside the ustiloxin B gene cluster, at the C-terminal side of Arg-Lys, after transfer to Golgi apparatus through the endoplasmic reticulum (ER). Cleavage by KEX2 generates 16 peptides YAIG-I to YAIG-XVI. To process the precursor peptide further, at least two peptidases are necessary to cleave the N-terminal and C-terminal sides of the Tyr-Ala-Ile-Gly core peptide which serves as backbone for the synthesis of ustiloxin B, through cyclization and modification of the tyrosine with a non-protein coding amino acid, norvaline. One of the two peptidases must be the serine peptidase ustP; and the other pepdidase is probably ustH. Macrocyclization of the core peptide derived from ustA requires the tyrosinase ustQ, as well as the homologous oxidases ustYa and ustYb, and leads to the production of the first cyclization product N-desmethylustiloxin F. For the formation of N-desmethylustiloxin F, three oxidation steps are required, hydroxylation at the benzylic position, hydroxylation at either the aromatic ring of Tyr or beta-position of Ile, and oxidative cyclization. UstQ may catalyze the oxidation of a phenol moiety, whereas the ustYa and ustYb are most likely responsible for the remaining two-step oxidations. N-desmethylustiloxin F is then methylated by ustM to yield ustiloxin F which in turn substrate of the cytochrome P450 monooxygenase ustC which catalyzes the formation of S-deoxyustiloxin H. The flavoprotein monooxygenases ustF1 and ustF2 then participate in the modification of the side chain of S-deoxyustiloxin H, leading to the synthesis of an oxime intermediate, via ustiloxin H. Finally, carboxylative dehydration performed by the cysteine desulfurase-like protein ustD yields ustiloxin B. The polypeptide is Cysteine desulfurase-like protein ustD (Aspergillus flavus (strain ATCC 200026 / FGSC A1120 / IAM 13836 / NRRL 3357 / JCM 12722 / SRRC 167)).